A 725-amino-acid polypeptide reads, in one-letter code: N-alpha-acetyltransferase 35, NatC auxiliary subunit (725 aa).

The tract at residues 548 to 573 (ERIMEEQQKGRSSKKTKKKKKVRPLS) is disordered. The span at 558–571 (RSSKKTKKKKKVRP) shows a compositional bias: basic residues.

This sequence belongs to the MAK10 family. In terms of assembly, component of the N-terminal acetyltransferase C (NatC) complex, which is composed of NAA35, NAA38 and NAA30. As to expression, expressed in primary spermatocytes, basal epidermis, interstitial fibroblasts of skeletal muscle, and intestinal crypts.

The protein resides in the cytoplasm. Functionally, auxillary component of the N-terminal acetyltransferase C (NatC) complex which catalyzes acetylation of N-terminal methionine residues. N-terminal acetylation protects proteins from ubiquitination and degradation by the N-end rule pathway. Involved in regulation of apoptosis and proliferation of smooth muscle cells. This is N-alpha-acetyltransferase 35, NatC auxiliary subunit (Naa35) from Rattus norvegicus (Rat).